We begin with the raw amino-acid sequence, 324 residues long: UDP-galactose transporter homolog 1 (324 aa).

2 helical membrane passes run 7–27 (LVIAVCGIYATFLTWSLAQEP) and 42–62 (HSSFIVLCQALTAAVVGLCYL). Asparagine 97 is a glycosylation site (N-linked (GlcNAc...) asparagine). Helical transmembrane passes span 106–126 (VGYMLAKSCKLLPIMLVHVLV), 135–155 (KALVGVLVSGGVALFTLGGAE), 161–181 (ASLYGLGMLLVSLFLDGLTNA), 199–219 (HLMVALNTAIVLWNLAYLVLF), 237–257 (ILTYLFTYCACGALGQCFVFF), 265–285 (LVLATVTVTRKMVSMLLSIVV), and 290–310 (VRPVQWLGILVVFGGIIWETV).

The protein belongs to the nucleotide-sugar transporter family. SLC35B subfamily.

It localises to the endoplasmic reticulum membrane. In terms of biological role, may be involved in specific transport of UDP-Gal from the cytosol to the Golgi lumen. Involved in the maintenance of optimal conditions for the folding of secretory pathway proteins in the endoplasmic reticulum. The sequence is that of UDP-galactose transporter homolog 1 (HUT1) from Eremothecium gossypii (strain ATCC 10895 / CBS 109.51 / FGSC 9923 / NRRL Y-1056) (Yeast).